Consider the following 275-residue polypeptide: 2,3,4,5-tetrahydropyridine-2,6-dicarboxylate N-succinyltransferase (275 aa).

Positions 106 and 143 each coordinate substrate.

The protein belongs to the transferase hexapeptide repeat family. As to quaternary structure, homotrimer.

It localises to the cytoplasm. It catalyses the reaction (S)-2,3,4,5-tetrahydrodipicolinate + succinyl-CoA + H2O = (S)-2-succinylamino-6-oxoheptanedioate + CoA. The protein operates within amino-acid biosynthesis; L-lysine biosynthesis via DAP pathway; LL-2,6-diaminopimelate from (S)-tetrahydrodipicolinate (succinylase route): step 1/3. The protein is 2,3,4,5-tetrahydropyridine-2,6-dicarboxylate N-succinyltransferase of Burkholderia ambifaria (strain ATCC BAA-244 / DSM 16087 / CCUG 44356 / LMG 19182 / AMMD) (Burkholderia cepacia (strain AMMD)).